A 392-amino-acid chain; its full sequence is Adenosine 3'-phospho 5'-phosphosulfate transporter 2 (392 aa).

The interval 11-35 (NINGSASGQQAPTSNSPTLTRKSSS) is disordered. 10 helical membrane passes run 62 to 82 (CAGVFILYILYGYLQELIFTV), 87 to 107 (PFGWFLTLVQFGYYIGFGLVE), 136 to 156 (LVLAALTLGTMGLSNSSLGYL), 159 to 179 (PTQVIFKCCKLIPVLVGSILI), 185 to 205 (GPLDFAAASCMCIGLAWFTLA), 212 to 232 (NFNLLGVAMISGALLCDAAIG), 249 to 269 (VVFYSYGLGFVYLFVIMLVTG), 286 to 306 (FGYGFLFSLSGYLGIQFVLAL), 314 to 334 (IAATVTTARKAVTIAFSFVLF), and 338 to 358 (FTVQYLWSGLIVVLGIYLNVY).

The protein belongs to the nucleotide-sugar transporter family. SLC35B subfamily.

It is found in the golgi apparatus membrane. Its function is as follows. Mediates the transport of adenosine 3'-phospho 5'-phosphosulfate (PAPS), from cytosol into Golgi. PAPS is a universal sulfuryl donor for sulfation events that take place in the Golgi. Essential for viability. Involved in glycosaminoglycan synthesis and the subsequent signaling. May be involved in hh and dpp signaling by controlling the sulfation of heparan sulfate (HS). The sequence is that of Adenosine 3'-phospho 5'-phosphosulfate transporter 2 from Drosophila pseudoobscura pseudoobscura (Fruit fly).